A 136-amino-acid chain; its full sequence is Small ribosomal subunit protein bS6 (136 aa).

A disordered region spans residues 99–136; sequence QSEMLKAEENRSERRERRERPEHGGHEGLDGDSDKADE. Residues 103-136 show a composition bias toward basic and acidic residues; the sequence is LKAEENRSERRERRERPEHGGHEGLDGDSDKADE.

This sequence belongs to the bacterial ribosomal protein bS6 family.

Its function is as follows. Binds together with bS18 to 16S ribosomal RNA. This Azotobacter vinelandii (strain DJ / ATCC BAA-1303) protein is Small ribosomal subunit protein bS6.